Here is a 135-residue protein sequence, read N- to C-terminus: UPF0329 protein ECU07_1860/ECU10_0040/ECU11_2100 (135 aa).

The protein belongs to the UPF0329 family.

This chain is UPF0329 protein ECU07_1860/ECU10_0040/ECU11_2100, found in Encephalitozoon cuniculi (strain GB-M1) (Microsporidian parasite).